A 702-amino-acid chain; its full sequence is Ribosomal RNA large subunit methyltransferase K/L (702 aa).

One can recognise a THUMP domain in the interval 43–154 (LIYQSLMWSR…KETASIALDL (112 aa)).

The protein belongs to the methyltransferase superfamily. RlmKL family.

Its subcellular location is the cytoplasm. The catalysed reaction is guanosine(2445) in 23S rRNA + S-adenosyl-L-methionine = N(2)-methylguanosine(2445) in 23S rRNA + S-adenosyl-L-homocysteine + H(+). The enzyme catalyses guanosine(2069) in 23S rRNA + S-adenosyl-L-methionine = N(2)-methylguanosine(2069) in 23S rRNA + S-adenosyl-L-homocysteine + H(+). In terms of biological role, specifically methylates the guanine in position 2445 (m2G2445) and the guanine in position 2069 (m7G2069) of 23S rRNA. The protein is Ribosomal RNA large subunit methyltransferase K/L of Salmonella choleraesuis (strain SC-B67).